The primary structure comprises 150 residues: Macrodomain Ter protein (150 aa).

It belongs to the MatP family. Homodimer.

The protein localises to the cytoplasm. Functionally, required for spatial organization of the terminus region of the chromosome (Ter macrodomain) during the cell cycle. Prevents early segregation of duplicated Ter macrodomains during cell division. Binds specifically to matS, which is a 13 bp signature motif repeated within the Ter macrodomain. The chain is Macrodomain Ter protein from Escherichia coli O8 (strain IAI1).